We begin with the raw amino-acid sequence, 427 residues long: Dihydroorotase (427 aa).

Residues His60 and His62 each coordinate Zn(2+). Residues 62-64 (HFR) and Asn94 contribute to the substrate site. Asp152, His179, and His232 together coordinate Zn(2+). Asn278 lines the substrate pocket. Asp305 contacts Zn(2+). Asp305 is a catalytic residue. Substrate is bound by residues His309 and 323–324 (FG).

This sequence belongs to the metallo-dependent hydrolases superfamily. DHOase family. Class I DHOase subfamily. The cofactor is Zn(2+).

It carries out the reaction (S)-dihydroorotate + H2O = N-carbamoyl-L-aspartate + H(+). It participates in pyrimidine metabolism; UMP biosynthesis via de novo pathway; (S)-dihydroorotate from bicarbonate: step 3/3. Its function is as follows. Catalyzes the reversible cyclization of carbamoyl aspartate to dihydroorotate. In Enterococcus faecalis (strain ATCC 700802 / V583), this protein is Dihydroorotase.